Here is a 90-residue protein sequence, read N- to C-terminus: DNA-binding protein HU (90 aa).

Thr4 is modified (phosphothreonine). Residues 56-90 form a disordered region; it reads AARKGRNPQTGEEMEIPASKVPAFKPGKALKDAVK.

The protein belongs to the bacterial histone-like protein family. As to quaternary structure, homodimer.

Functionally, histone-like DNA-binding protein which is capable of wrapping DNA to stabilize it, and thus to prevent its denaturation under extreme environmental conditions. In Geobacillus stearothermophilus (Bacillus stearothermophilus), this protein is DNA-binding protein HU (hup).